Reading from the N-terminus, the 83-residue chain is Hainantoxin-III 4 (83 aa).

The N-terminal stretch at 1–21 (MKASMYLALAGLVLLFVVGYA) is a signal peptide. The propeptide occupies 22-48 (SESEEKEFPRELLSKIFAVDDFKGKER). Intrachain disulfides connect Cys50-Cys65, Cys57-Cys70, and Cys64-Cys77. Leu81 bears the Leucine amide mark.

The protein belongs to the neurotoxin 10 (Hwtx-1) family. 15 (Hntx-3) subfamily. In terms of assembly, monomer. As to expression, expressed by the venom gland.

The protein resides in the secreted. Functionally, selective antagonist of neuronal tetrodotoxin (TTX)-sensitive voltage-gated sodium channels (IC(50)=1270 nM on Nav1.1/SCN1A, 270 nM on Nav1.2/SCN2A, 491 nM on Nav1.3/SCN3A and 232 nM on Nav1.7/SCN9A). This toxin suppress Nav1.7 current amplitude without significantly altering the activation, inactivation, and repriming kinetics. Short extreme depolarizations partially activate the toxin-bound channel, indicating voltage-dependent inhibition of this toxin. This toxin increases the deactivation of the Nav1.7 current after extreme depolarizations. The toxin-Nav1.7 complex is gradually dissociated upon prolonged strong depolarizations in a voltage-dependent manner, and the unbound toxin rebinds to Nav1.7 after a long repolarization. Moreover, analysis of chimeric channels showed that the DIIS3-S4 linker is critical for toxin binding to Nav1.7. These data are consistent with this toxin interacting with Nav1.7 site 4 and trapping the domain II voltage sensor in the closed state. The protein is Hainantoxin-III 4 of Cyriopagopus hainanus (Chinese bird spider).